Reading from the N-terminus, the 386-residue chain is Copper-containing nitrite reductase (386 aa).

Residues 1 to 18 form the signal peptide; the sequence is MKRQALAAIIASMFALAA. Cys19 carries the N-palmitoyl cysteine lipid modification. The S-diacylglycerol cysteine moiety is linked to residue Cys19. Plastocyanin-like domains follow at residues 97 to 191 and 241 to 342; these read WTFD…ILVE and GHVG…LKVE. Residues His130, His135, His170, Cys171, His179, and Met184 each contribute to the Cu cation site. His135 serves as a coordination point for substrate. His276 contributes to the substrate binding site. Cu cation is bound at residue His325. Residues 363 to 386 form a disordered region; it reads GAAPAASAPAASAPAASAPAKSDY. Residues 364-386 show a composition bias toward low complexity; that stretch reads AAPAASAPAASAPAASAPAKSDY. Repeat copies occupy residues 367 to 371, 372 to 376, and 377 to 381. Residues 367–381 are 3 X 5 AA tandem repeats of A-A-S-A-P; sequence AASAPAASAPAASAP.

This sequence belongs to the multicopper oxidase family. In terms of assembly, homotrimer. Cu(+) is required as a cofactor. Cu(2+) serves as cofactor.

The protein resides in the cell outer membrane. The catalysed reaction is nitric oxide + Fe(III)-[cytochrome c] + H2O = Fe(II)-[cytochrome c] + nitrite + 2 H(+). Catalyzes the reduction of nitrite to nitric oxide (NO). It could be essential for growth and survival in oxygen-depleted environments. This Neisseria meningitidis serogroup A / serotype 4A (strain DSM 15465 / Z2491) protein is Copper-containing nitrite reductase (aniA).